A 370-amino-acid chain; its full sequence is UDP-N-acetylglucosamine--N-acetylmuramyl-(pentapeptide) pyrophosphoryl-undecaprenol N-acetylglucosamine transferase (370 aa).

Residues 10–12, Asn126, Ser200, Ile255, and Gln300 each bind UDP-N-acetyl-alpha-D-glucosamine; that span reads TGG.

This sequence belongs to the glycosyltransferase 28 family. MurG subfamily.

The protein resides in the cell membrane. It carries out the reaction Mur2Ac(oyl-L-Ala-gamma-D-Glu-L-Lys-D-Ala-D-Ala)-di-trans,octa-cis-undecaprenyl diphosphate + UDP-N-acetyl-alpha-D-glucosamine = beta-D-GlcNAc-(1-&gt;4)-Mur2Ac(oyl-L-Ala-gamma-D-Glu-L-Lys-D-Ala-D-Ala)-di-trans,octa-cis-undecaprenyl diphosphate + UDP + H(+). The protein operates within cell wall biogenesis; peptidoglycan biosynthesis. Cell wall formation. Catalyzes the transfer of a GlcNAc subunit on undecaprenyl-pyrophosphoryl-MurNAc-pentapeptide (lipid intermediate I) to form undecaprenyl-pyrophosphoryl-MurNAc-(pentapeptide)GlcNAc (lipid intermediate II). The sequence is that of UDP-N-acetylglucosamine--N-acetylmuramyl-(pentapeptide) pyrophosphoryl-undecaprenol N-acetylglucosamine transferase from Lactobacillus delbrueckii subsp. bulgaricus (strain ATCC 11842 / DSM 20081 / BCRC 10696 / JCM 1002 / NBRC 13953 / NCIMB 11778 / NCTC 12712 / WDCM 00102 / Lb 14).